A 229-amino-acid chain; its full sequence is ATP synthase subunit a (229 aa).

A run of 7 helical transmembrane segments spans residues 25-45 (VHIIYTWVVMALLITLGVLGA), 58-75 (FLEVLISGIEEFMVSVTG), 81-101 (FFPLAGTIAIFIAVSNLIGLV), 110-130 (SINTPLACAIVVFVFTHFIGI), 141-161 (FLGPVWWLAPLIFPIEIIGHL), 175-195 (MMGHESVLVILFMLGGAFFAP), and 196-216 (LPIMALGIFVAFVQAFVFFLL).

The protein belongs to the ATPase A chain family. As to quaternary structure, F-type ATPases have 2 components, CF(1) - the catalytic core - and CF(0) - the membrane proton channel. CF(1) has five subunits: alpha(3), beta(3), gamma(1), delta(1), epsilon(1). CF(0) has three main subunits: a(1), b(2) and c(9-12). The alpha and beta chains form an alternating ring which encloses part of the gamma chain. CF(1) is attached to CF(0) by a central stalk formed by the gamma and epsilon chains, while a peripheral stalk is formed by the delta and b chains.

It is found in the cell inner membrane. Its function is as follows. Key component of the proton channel; it plays a direct role in the translocation of protons across the membrane. In Desulfosudis oleivorans (strain DSM 6200 / JCM 39069 / Hxd3) (Desulfococcus oleovorans), this protein is ATP synthase subunit a.